The following is a 340-amino-acid chain: MTTATANKVKAPKKGFKLDRQMIPTLAAVVIFILMIIMGQALFGTYIRLGFISSLFIDHAYLIILAVAMTLPILTGGIDLSVGAIVAITAVVGLKLANAGVPAFLVMIIMLLIGAVFGLLAGTLIEEFNMQPFIATLSTMFLARGLASIISTDSLTFPQGNDFSFISNVIKIIDNPKISNDLSFNVGVIIALVVVVFGYVFLHHTRTGRTIYAIGGSRSSAELMGLPVKRTQYIIYLTSATLAALASIVYTANIGSAKNTVGVGWELDAVASVVIGGTIITGGFGYVLGSVLGSLVRSILDPLTSDFGVPAEWTTIVIGLMILVFVVLQRAVMAVGGDKK.

9 helical membrane passes run 23–43 (IPTL…QALF), 49–69 (LGFI…AVAM), 73–93 (ILTG…AVVG), 101–121 (VPAF…GLLA), 130–150 (MQPF…ASII), 182–202 (LSFN…YVFL), 234–254 (IIYL…TANI), 273–293 (VVIG…SVLG), and 307–327 (FGVP…VFVV).

It belongs to the binding-protein-dependent transport system permease family. The complex is composed of an ATP-binding protein (FruK), two transmembrane proteins (FruF and FruG) and a solute-binding protein (FruE).

Its subcellular location is the cell membrane. Its function is as follows. Part of the high-affinity ABC transporter complex FruEKFG involved in fructose uptake. Can also transport ribose and xylose, with lower affinity. Probably responsible for the translocation of the substrate across the membrane. This chain is Fructose import permease protein FruG, found in Bifidobacterium longum (strain NCC 2705).